The chain runs to 589 residues: Protein POF1B (589 aa).

Positions 334 to 443 form a coiled coil; the sequence is TFSNIREELG…QNLRMQVSET (110 aa).

Interacts with nonmuscle actin.

It localises to the cell junction. The protein localises to the tight junction. Its function is as follows. Plays a key role in the organization of epithelial monolayers by regulating the actin cytoskeleton. May be involved in ovary development. The protein is Protein POF1B (POF1B) of Homo sapiens (Human).